A 909-amino-acid polypeptide reads, in one-letter code: Valine--tRNA ligase (909 aa).

A 'HIGH' region motif is present at residues 52–62 (PNVTGVLHVGH). Residues 542-546 (KMSKS) carry the 'KMSKS' region motif. K545 serves as a coordination point for ATP. A coiled-coil region spans residues 843–902 (IDIDQLKKRFEKELEKNEQNASKIDSKLKNENFVKNAPPEVIEGEKEKHAEFLRRIEKLK).

Belongs to the class-I aminoacyl-tRNA synthetase family. ValS type 1 subfamily. In terms of assembly, monomer.

It localises to the cytoplasm. It catalyses the reaction tRNA(Val) + L-valine + ATP = L-valyl-tRNA(Val) + AMP + diphosphate. Its function is as follows. Catalyzes the attachment of valine to tRNA(Val). As ValRS can inadvertently accommodate and process structurally similar amino acids such as threonine, to avoid such errors, it has a 'posttransfer' editing activity that hydrolyzes mischarged Thr-tRNA(Val) in a tRNA-dependent manner. The sequence is that of Valine--tRNA ligase from Treponema denticola (strain ATCC 35405 / DSM 14222 / CIP 103919 / JCM 8153 / KCTC 15104).